The sequence spans 216 residues: MSLGLVGRKVGMTRIFTAEGDSIPVTVLDVSDNRVTQIKTVETDGYTAVQVAFGSRRASRVTKPLAGHLAKAGVEAGEILKEFRIDAAKAAELSNGAVVGADLFEVGQKVDVQGVSIGKGYAGTIKRYNFSSGRATHGNSRSHNVPGSIGMAQDPGRVFPGKRMTGHMGDVTVTVQNLEIARIDAERKLLLVKGAIPGAKGGKVFVTPAVKTKGAK.

Positions 133–145 are enriched in polar residues; sequence GRATHGNSRSHNV. The segment at 133–153 is disordered; that stretch reads GRATHGNSRSHNVPGSIGMAQ. Residue glutamine 153 is modified to N5-methylglutamine.

Belongs to the universal ribosomal protein uL3 family. As to quaternary structure, part of the 50S ribosomal subunit. Forms a cluster with proteins L14 and L19. Post-translationally, methylated by PrmB.

Its function is as follows. One of the primary rRNA binding proteins, it binds directly near the 3'-end of the 23S rRNA, where it nucleates assembly of the 50S subunit. This Burkholderia cenocepacia (strain ATCC BAA-245 / DSM 16553 / LMG 16656 / NCTC 13227 / J2315 / CF5610) (Burkholderia cepacia (strain J2315)) protein is Large ribosomal subunit protein uL3.